The chain runs to 403 residues: Phosphopentomutase (403 aa).

Residues aspartate 13, aspartate 298, histidine 303, aspartate 339, histidine 340, and histidine 351 each coordinate Mn(2+).

Belongs to the phosphopentomutase family. It depends on Mn(2+) as a cofactor.

It is found in the cytoplasm. The enzyme catalyses 2-deoxy-alpha-D-ribose 1-phosphate = 2-deoxy-D-ribose 5-phosphate. It carries out the reaction alpha-D-ribose 1-phosphate = D-ribose 5-phosphate. The protein operates within carbohydrate degradation; 2-deoxy-D-ribose 1-phosphate degradation; D-glyceraldehyde 3-phosphate and acetaldehyde from 2-deoxy-alpha-D-ribose 1-phosphate: step 1/2. Functionally, isomerase that catalyzes the conversion of deoxy-ribose 1-phosphate (dRib-1-P) and ribose 1-phosphate (Rib-1-P) to deoxy-ribose 5-phosphate (dRib-5-P) and ribose 5-phosphate (Rib-5-P), respectively. The polypeptide is Phosphopentomutase (Streptococcus suis (strain 05ZYH33)).